The following is an 801-amino-acid chain: Probable methionine--tRNA ligase (801 aa).

Positions 25–35 match the 'HIGH' region motif; sequence PYVNNVPHLGN. The 'KMSKS' region motif lies at 347–351; that stretch reads KFSKS. Lys350 contacts ATP. A disordered region spans residues 606 to 633; it reads DKLKGTKLSDGGQKKEQKKQSGGSKSKN. The region spanning 639–742 is the tRNA-binding domain; that stretch reads TVAKLDIRVG…ESAAVGERVT (104 aa).

The protein belongs to the class-I aminoacyl-tRNA synthetase family.

It is found in the cytoplasm. The enzyme catalyses tRNA(Met) + L-methionine + ATP = L-methionyl-tRNA(Met) + AMP + diphosphate. The sequence is that of Probable methionine--tRNA ligase from Oryza sativa subsp. japonica (Rice).